The sequence spans 212 residues: Large ribosomal subunit protein uL3 (212 aa).

Residues 129-156 (RRGPMGHGSKNHRAPGSTGAGTTPGRIY) are disordered. Over residues 142–153 (APGSTGAGTTPG) the composition is skewed to low complexity.

It belongs to the universal ribosomal protein uL3 family. As to quaternary structure, part of the 50S ribosomal subunit. Forms a cluster with proteins L14 and L19.

In terms of biological role, one of the primary rRNA binding proteins, it binds directly near the 3'-end of the 23S rRNA, where it nucleates assembly of the 50S subunit. In Acaryochloris marina (strain MBIC 11017), this protein is Large ribosomal subunit protein uL3.